Consider the following 281-residue polypeptide: uncharacterized protein (281 aa).

The protein resides in the plastid. Its subcellular location is the chloroplast. This is an uncharacterized protein from Euglena gracilis.